The primary structure comprises 238 residues: MTEEVILKVGLTPKHQCSYLGHEQEQLLVLMDHSLLNASGYERLLTAGFRRSGNDIYRPHCPACNACQSLRIHSERFVPSRSQKRIRQLNQDIELVLSYDDKPEYYQLYERYIRERHHDGSMYPPSRTQYKGFLHCDWMPPLYLEMRKDNRLIGVATTDLLPHSLSAMYTFFDPAHADRSLGTFAILSQLELARRTGRSWLYLGYLVEECRKMNYKRQYLPHERLIQGEWKNIDSKPE.

Belongs to the R-transferase family. Bpt subfamily.

It is found in the cytoplasm. It catalyses the reaction N-terminal L-glutamyl-[protein] + L-leucyl-tRNA(Leu) = N-terminal L-leucyl-L-glutamyl-[protein] + tRNA(Leu) + H(+). The catalysed reaction is N-terminal L-aspartyl-[protein] + L-leucyl-tRNA(Leu) = N-terminal L-leucyl-L-aspartyl-[protein] + tRNA(Leu) + H(+). Functions in the N-end rule pathway of protein degradation where it conjugates Leu from its aminoacyl-tRNA to the N-termini of proteins containing an N-terminal aspartate or glutamate. This chain is Aspartate/glutamate leucyltransferase, found in Aeromonas hydrophila subsp. hydrophila (strain ATCC 7966 / DSM 30187 / BCRC 13018 / CCUG 14551 / JCM 1027 / KCTC 2358 / NCIMB 9240 / NCTC 8049).